We begin with the raw amino-acid sequence, 256 residues long: Thiazole synthase (256 aa).

The Schiff-base intermediate with DXP role is filled by K95. 1-deoxy-D-xylulose 5-phosphate contacts are provided by residues G156, 182–183 (AG), and 204–205 (NT).

It belongs to the ThiG family. In terms of assembly, homotetramer. Forms heterodimers with either ThiH or ThiS.

Its subcellular location is the cytoplasm. It catalyses the reaction [ThiS sulfur-carrier protein]-C-terminal-Gly-aminoethanethioate + 2-iminoacetate + 1-deoxy-D-xylulose 5-phosphate = [ThiS sulfur-carrier protein]-C-terminal Gly-Gly + 2-[(2R,5Z)-2-carboxy-4-methylthiazol-5(2H)-ylidene]ethyl phosphate + 2 H2O + H(+). The protein operates within cofactor biosynthesis; thiamine diphosphate biosynthesis. In terms of biological role, catalyzes the rearrangement of 1-deoxy-D-xylulose 5-phosphate (DXP) to produce the thiazole phosphate moiety of thiamine. Sulfur is provided by the thiocarboxylate moiety of the carrier protein ThiS. In vitro, sulfur can be provided by H(2)S. This is Thiazole synthase from Escherichia coli (strain K12 / MC4100 / BW2952).